The sequence spans 623 residues: MTEYDYEELGLVAGLEIHQQLDTATKLFCDCPTTIREPEESDRSFTRYLHPTKSELGEIDEAALEESMVDREFEYLAYDTTCLVEEDDEPPHRVDREAMETTLEIAQLLDMSVADQVNIMRKIVVDGSNTTGFQRSMLVANDGAIETSAGPVGVEDMLLEEESCQRIEETEDGVRFSLDRLGIPLVEIGTKPDISSPEQAREAAERIGMLLRSTGKVKRGLGTIRQDVNVSIEEGARIELKGVQSLDDIDDLVRNEVRRQVELLDIAEELAERGATVGEPQDVTEVFEDTDSGVIEGALSSGGKVQGLLLSGFDGLVGREIQPDRRLGTELSDHAKRHGAGGIFHTDELPAYGVTEAEVEALRDAVGAGSEDAVAIVADDPETAELAIDAVAERAETALAGVPEETRDANEDATSRYLRPLPGAARMYPETDVPPVEPDVTEVETPELLTEKVDRYESEFDLGSGLAEQVAYGQRWPLFEALVAGEGVDPTLAAGTLESTLTELRRDDVPVENLTDKHLQGAILLVDGGDVPREGMEDLLTALAENPSLTAEEAVEQEGLGGVDESEVRDAVAEVVERHEDQVAEEGMGAFSALMGECMGALRGKADGDTVSDVLRSEIQKRA.

The protein belongs to the GatB/GatE family. GatE subfamily. In terms of assembly, heterodimer of GatD and GatE.

The catalysed reaction is L-glutamyl-tRNA(Gln) + L-glutamine + ATP + H2O = L-glutaminyl-tRNA(Gln) + L-glutamate + ADP + phosphate + H(+). Its function is as follows. Allows the formation of correctly charged Gln-tRNA(Gln) through the transamidation of misacylated Glu-tRNA(Gln) in organisms which lack glutaminyl-tRNA synthetase. The reaction takes place in the presence of glutamine and ATP through an activated gamma-phospho-Glu-tRNA(Gln). The GatDE system is specific for glutamate and does not act on aspartate. This is Glutamyl-tRNA(Gln) amidotransferase subunit E from Haloarcula marismortui (strain ATCC 43049 / DSM 3752 / JCM 8966 / VKM B-1809) (Halobacterium marismortui).